A 317-amino-acid chain; its full sequence is Terpene synthase 3 (317 aa).

A DDxx(x)D/E motif motif is present at residues 96–101 (DDFYFE). Positions 223-231 (NDMVSFERE) match the NDxxSxxxD/E motif motif.

This sequence belongs to the terpene synthase family.

In terms of biological role, terpene synthase that converts its substrate farnesyl diphosphate (FPP) into the sesquiterpene CAS 137235-51-9 as a major product. Is also able to convert FPP into 9-epi-(E)-caryophyllene, alpha-neoclovene, beta-neoclovene, and 3 yet unidentified sesquiterpenes. The chain is Terpene synthase 3 from Dictyostelium purpureum (Slime mold).